Consider the following 123-residue polypeptide: UPF0102 protein CLM_2733 (123 aa).

The protein belongs to the UPF0102 family.

The polypeptide is UPF0102 protein CLM_2733 (Clostridium botulinum (strain Kyoto / Type A2)).